Here is a 127-residue protein sequence, read N- to C-terminus: MKVLEGLKYSKEHEWVKVLEDNKVSVGITDFAQDELGDIVFVNLPAVGQEIKVGETLASLESVKSASDVYSPVSGKVVEVNEKLKNSPEIINDDPYGEGWIAVIELSDVSVLDTLMSAEEYKQFIGE.

The Lipoyl-binding domain maps to 23-105; sequence KVSVGITDFA…YGEGWIAVIE (83 aa). N6-lipoyllysine is present on Lys64.

This sequence belongs to the GcvH family. As to quaternary structure, the glycine cleavage system is composed of four proteins: P, T, L and H. (R)-lipoate is required as a cofactor.

Its function is as follows. The glycine cleavage system catalyzes the degradation of glycine. The H protein shuttles the methylamine group of glycine from the P protein to the T protein. This chain is Glycine cleavage system H protein, found in Coprothermobacter proteolyticus (strain ATCC 35245 / DSM 5265 / OCM 4 / BT).